Reading from the N-terminus, the 484-residue chain is Vanillin dehydrogenase (484 aa).

Residues 156–157, 180–183, and 234–235 contribute to the NADP(+) site; these read WN, KPAS, and GS. NAD(+) contacts are provided by residues Lys180 and 234–239; that span reads GSTPVG. Glu258 functions as the Proton acceptor in the catalytic mechanism. Leu259 contributes to the NADP(+) binding site. The active-site Nucleophile is the Cys292. Positions 339 and 386 each coordinate NAD(+). Glu386 is an NADP(+) binding site.

Belongs to the aldehyde dehydrogenase family. In terms of assembly, exists as a homodimer, homotrimer and homotetramer.

It catalyses the reaction vanillin + NAD(+) + H2O = vanillate + NADH + 2 H(+). The catalysed reaction is vanillin + NADP(+) + H2O = vanillate + NADPH + 2 H(+). It carries out the reaction 3,4-dihydroxybenzaldehyde + NAD(+) + H2O = 3,4-dihydroxybenzoate + NADH + 2 H(+). The enzyme catalyses 3,4-dihydroxybenzaldehyde + NADP(+) + H2O = 3,4-dihydroxybenzoate + NADPH + 2 H(+). It catalyses the reaction 4-hydroxybenzaldehyde + NAD(+) + H2O = 4-hydroxybenzoate + NADH + 2 H(+). The catalysed reaction is 4-hydroxybenzaldehyde + NADP(+) + H2O = 4-hydroxybenzoate + NADPH + 2 H(+). Catalyzes oxidation of vanillin to vanillate. Also oxidizes 3,4-dihydroxybenzaldehyde and 4-hydroxybenzaldehyde significantly. Other aromatic aldehyde substrates in the order of decreasing activity include 3-hydroxybenzaldehyde, 4-nitrobenzaldehyde, terephthalaldehyde, 2,4-dichlorobenzaldehyde, benzaldehyde and 3-phenylpropanal. Low activity with phthalaldehyde, cinnamaldehyde and syringaldehyde. No activity with phenylacetaldehyde, formaldehyde or aldehyde. Active with both NAD(+) and NADP(+). Involved in the degradation pathway of lignin-derived aromatic compounds of plant cell walls. Catalyzes the conversion of vanillin to vanillate due to toxicity of vanillin to the cells. This chain is Vanillin dehydrogenase, found in Corynebacterium glutamicum (strain ATCC 13032 / DSM 20300 / JCM 1318 / BCRC 11384 / CCUG 27702 / LMG 3730 / NBRC 12168 / NCIMB 10025 / NRRL B-2784 / 534).